The following is a 984-amino-acid chain: Respiratory nitrate reductase subunit alpha (984 aa).

Residues 1-43 (MSRNDASQLDDGETTAESPPDDQANDAPEVGDPPGDPVDADSG) are disordered. Residues 8 to 24 (QLDDGETTAESPPDDQA) show a composition bias toward acidic residues. The region spanning 103-167 (DSVSRSTHSV…CYTDYVNADQ (65 aa)) is the 4Fe-4S Mo/W bis-MGD-type domain. His-110, Cys-114, Cys-118, and Cys-153 together coordinate [4Fe-4S] cluster. Asp-249 is a binding site for Mo-bis(molybdopterin guanine dinucleotide).

The protein belongs to the prokaryotic molybdopterin-containing oxidoreductase family. In terms of assembly, probable multiprotein complex; a catalytic heterodimer of an alpha and beta chain is proposed to associate with additional subunits involved in membrane attachment and electron transfer. Requires [4Fe-4S] cluster as cofactor. Mo-bis(molybdopterin guanine dinucleotide) is required as a cofactor. Exported by the Tat system.

It is found in the cell membrane. It carries out the reaction nitrate + a quinol = a quinone + nitrite + H2O. Inhibited by cyanide, azide and antimycin A. Enzyme stability is not dependent on salt concentration. Its function is as follows. The respiratory membrane-bound nitrate reductase enzyme complex plays a role in generation of metabolic energy by using nitrate as a terminal electron acceptor during anaerobic conditions. The alpha chain is the actual site of nitrate reduction. The polypeptide is Respiratory nitrate reductase subunit alpha (narG) (Haloferax mediterranei (strain ATCC 33500 / DSM 1411 / JCM 8866 / NBRC 14739 / NCIMB 2177 / R-4) (Halobacterium mediterranei)).